A 197-amino-acid polypeptide reads, in one-letter code: Protein RmlC homolog (197 aa).

Residue His-76 is the Proton acceptor of the active site. Tyr-140 acts as the Proton donor in catalysis.

Functionally, could catalyze a 3,5-epimerization. The chain is Protein RmlC homolog (rfbC) from Streptococcus pyogenes serotype M6 (strain ATCC BAA-946 / MGAS10394).